The following is a 222-amino-acid chain: Putative N-acetylmannosamine-6-phosphate 2-epimerase (222 aa).

It belongs to the NanE family.

It carries out the reaction an N-acyl-D-glucosamine 6-phosphate = an N-acyl-D-mannosamine 6-phosphate. The protein operates within amino-sugar metabolism; N-acetylneuraminate degradation; D-fructose 6-phosphate from N-acetylneuraminate: step 3/5. Converts N-acetylmannosamine-6-phosphate (ManNAc-6-P) to N-acetylglucosamine-6-phosphate (GlcNAc-6-P). The polypeptide is Putative N-acetylmannosamine-6-phosphate 2-epimerase (Staphylococcus aureus (strain MSSA476)).